The sequence spans 466 residues: Muscarinic acetylcholine receptor M2 (466 aa).

Residues 1-22 lie on the Extracellular side of the membrane; that stretch reads MNNSTNSSNNSLALTSPYKTFE. N-linked (GlcNAc...) asparagine glycosylation is found at Asn2, Asn3, Asn6, and Asn9. Residues 23–45 traverse the membrane as a helical segment; it reads VVFIVLVAGSLSLVTIIGNILVM. Topologically, residues 46 to 59 are cytoplasmic; the sequence is VSIKVNRHLQTVNN. Residues 60–80 form a helical membrane-spanning segment; it reads YFLFSLACADLIIGVFSMNLY. The Extracellular portion of the chain corresponds to 81–97; that stretch reads TLYTVIGYWPLGPVVCD. Cysteines 96 and 176 form a disulfide. Residues 98–119 traverse the membrane as a helical segment; it reads LWLALDYVVSNASVMNLLIISF. Residues 120 to 122 carry the Important for signaling motif; it reads DRY. The Cytoplasmic portion of the chain corresponds to 120–139; the sequence is DRYFCVTKPLTYPVKRTTKM. Residues 140 to 162 traverse the membrane as a helical segment; that stretch reads AGMMIAAAWVLSFILWAPAILFW. Residues 163-184 lie on the Extracellular side of the membrane; sequence QFIVGVRTVEDGECYIQFFSNA. A helical membrane pass occupies residues 185-209; that stretch reads AVTFGTAIAAFYLPVIIMTVLYWHI. The Cytoplasmic portion of the chain corresponds to 210–387; it reads SRASKSRIKK…PPSREKKVTR (178 aa). The interval 218 to 355 is disordered; that stretch reads KKDKKEPVAN…VVGSSGQNGD (138 aa). At Ser232 the chain carries Phosphoserine. The segment covering 254–270 has biased composition (basic and acidic residues); it reads GLEHNKIQNGKAPRDPV. Composition is skewed to polar residues over residues 284 to 293, 304 to 313, and 334 to 353; these read NDSTSVSAVA, DENTVSTSLG, and SDSCTPTNTTVEVVGSSGQN. Residues 388-410 traverse the membrane as a helical segment; it reads TILAILLAFIITWAPYNVMVLIN. Residues 411–418 lie on the Extracellular side of the membrane; that stretch reads TFCAPCIP. Cysteines 413 and 416 form a disulfide. Residues 419 to 442 traverse the membrane as a helical segment; that stretch reads NTVWTIGYWLCYINSTINPACYAL. Positions 436 to 440 match the Important for signaling motif; sequence NPACY. At 443–466 the chain is on the cytoplasmic side; sequence CNATFKKTFKHLLMCHYKNIGATR. Phosphothreonine occurs at positions 446, 450, and 465.

The protein belongs to the G-protein coupled receptor 1 family. Muscarinic acetylcholine receptor subfamily. CHRM2 sub-subfamily. Interacts with ARRB1 and ARRB2. Interacts with RACK1; the interaction regulates CHRM2 internalization. Phosphorylated in response to agonist treatment.

The protein localises to the cell membrane. It localises to the postsynaptic cell membrane. Its function is as follows. The muscarinic acetylcholine receptor mediates various cellular responses, including inhibition of adenylate cyclase, breakdown of phosphoinositides and modulation of potassium channels through the action of G proteins. Primary transducing effect is adenylate cyclase inhibition. Signaling promotes phospholipase C activity, leading to the release of inositol trisphosphate (IP3); this then triggers calcium ion release into the cytosol. The chain is Muscarinic acetylcholine receptor M2 (CHRM2) from Homo sapiens (Human).